The sequence spans 370 residues: Immunoglobulin superfamily member 5 (370 aa).

Residues 1 to 24 form the signal peptide; the sequence is MEGSWRDVLAVLVILAQLTASGSS. 2 Ig-like V-type domains span residues 25–125 and 128–215; these read YQII…LSVQ and GTLN…KSLT. The Extracellular segment spans residues 25–239; sequence YQIIEGPQNV…EEGPALPTWA (215 aa). N-linked (GlcNAc...) asparagine glycosylation is found at Asn-33 and Asn-45. Cys-46 and Cys-109 are joined by a disulfide. 3 N-linked (GlcNAc...) asparagine glycosylation sites follow: Asn-146, Asn-196, and Asn-217. Cysteines 149 and 201 form a disulfide. A helical transmembrane segment spans residues 240-260; the sequence is IILLAVAFSLLLILIIVLIII. At 261 to 370 the chain is on the cytoplasmic side; the sequence is FCCCCASRRE…PQKVRNVTLV (110 aa). The segment at 284–359 is disordered; the sequence is ANMRTNKADP…THPRVSFDIA (76 aa). Over residues 289–301 the composition is skewed to basic and acidic residues; sequence NKADPETKLKGGK.

Belongs to the immunoglobulin superfamily. In terms of assembly, interacts with MAGI1 at tight junctions, forms a tripartite complex with NPHS1. Interacts with LNX1 isoform 2 via its PDZ 2 domain, it may also interact with other isoforms containing this domain. In terms of processing, N-glycosylated. In terms of tissue distribution, localized to kidney glomeruli and small intestinal epithelial cells. In kidney glomeruli, it is localized at slit diaphragm. Also found in spermatogonia, gonocytes, hematopoietic stem cells and Sertoli cells.

The protein localises to the apical cell membrane. The protein resides in the cell junction. It is found in the tight junction. Functionally, provides, together with MAGI1, an adhesion machinery at tight junctions, which may regulate the permeability of kidney glomerulus and small intestinal epithelial cells. Mediates calcium-independent homophilic cell adhesion. In testis, it may function as a cell adhesion molecule rather than a tight-junction protein. It may participate in the adhesion between spermatogonia-spermatogonia, spermatogonia-Sertoli cells, and Sertoli cells-Sertoli cells. The chain is Immunoglobulin superfamily member 5 (Igsf5) from Mus musculus (Mouse).